Here is a 119-residue protein sequence, read N- to C-terminus: Large ribosomal subunit protein uL18 (119 aa).

Belongs to the universal ribosomal protein uL18 family. In terms of assembly, part of the 50S ribosomal subunit; part of the 5S rRNA/L5/L18/L25 subcomplex. Contacts the 5S and 23S rRNAs.

This is one of the proteins that bind and probably mediate the attachment of the 5S RNA into the large ribosomal subunit, where it forms part of the central protuberance. The chain is Large ribosomal subunit protein uL18 from Lactobacillus johnsonii (strain CNCM I-12250 / La1 / NCC 533).